Reading from the N-terminus, the 243-residue chain is Pyridoxine 5'-phosphate synthase (243 aa).

A 3-amino-2-oxopropyl phosphate-binding site is contributed by Asn7. Position 9-10 (9-10 (DH)) interacts with 1-deoxy-D-xylulose 5-phosphate. Arg18 lines the 3-amino-2-oxopropyl phosphate pocket. His43 acts as the Proton acceptor in catalysis. 1-deoxy-D-xylulose 5-phosphate-binding residues include Arg45 and His50. Glu70 (proton acceptor) is an active-site residue. Residue Thr100 coordinates 1-deoxy-D-xylulose 5-phosphate. His192 functions as the Proton donor in the catalytic mechanism. 3-amino-2-oxopropyl phosphate contacts are provided by residues Gly193 and 215–216 (GF).

It belongs to the PNP synthase family. In terms of assembly, homooctamer; tetramer of dimers.

Its subcellular location is the cytoplasm. It catalyses the reaction 3-amino-2-oxopropyl phosphate + 1-deoxy-D-xylulose 5-phosphate = pyridoxine 5'-phosphate + phosphate + 2 H2O + H(+). Its pathway is cofactor biosynthesis; pyridoxine 5'-phosphate biosynthesis; pyridoxine 5'-phosphate from D-erythrose 4-phosphate: step 5/5. Functionally, catalyzes the complicated ring closure reaction between the two acyclic compounds 1-deoxy-D-xylulose-5-phosphate (DXP) and 3-amino-2-oxopropyl phosphate (1-amino-acetone-3-phosphate or AAP) to form pyridoxine 5'-phosphate (PNP) and inorganic phosphate. This is Pyridoxine 5'-phosphate synthase from Salinibacter ruber (strain DSM 13855 / M31).